We begin with the raw amino-acid sequence, 53 residues long: uncharacterized protein (53 aa).

The chain crosses the membrane as a helical span at residues 18–38 (FLFFIFYFLFFFIFFTVFGNL).

The protein resides in the membrane. This is an uncharacterized protein from Dictyostelium discoideum (Social amoeba).